We begin with the raw amino-acid sequence, 346 residues long: MEMELIQGNEAAVRGAINAGCNFFAGYPITPSSEIAHGMAELLPKFGGVFIQMEDEIASISAVIGASMAGAVAMTATSGPGFSLMQEGMGYAAITESPVVIFNVMRAGPSTGIPTAPSQGDAMQARYGSHGDYPIVVLAPASVKDMYYLTVEAFKIAFRFSTPVIVLSDEIVGHMRESVALPPLGEIESYEKRAKNLIDGRRRHRTGLVHTENGLPTTDLEEYEKLLRLLFAKFDDFRPMVRFEGEEGVLFVAYGSSYRLAKSSAKLLAEKGVSAGILKLESLFPFPEDAVRRYSKKADLVVVPEMNAGQVVKEVERVCCCRVKGVSYFGSLILPEKLVEIVEGEL.

As to quaternary structure, heterotetramer of the KorA, KorB, KorC and KorD subunits.

It catalyses the reaction 2 oxidized [2Fe-2S]-[ferredoxin] + 2-oxoglutarate + CoA = succinyl-CoA + 2 reduced [2Fe-2S]-[ferredoxin] + CO2 + H(+). This Archaeoglobus fulgidus (strain ATCC 49558 / DSM 4304 / JCM 9628 / NBRC 100126 / VC-16) protein is 2-oxoglutarate synthase subunit KorA (korA).